A 659-amino-acid chain; its full sequence is DNA ligase (659 aa).

Residues 32–36, 81–82, and glutamate 110 each bind NAD(+); these read DAEYD and SL. Lysine 112 (N6-AMP-lysine intermediate) is an active-site residue. NAD(+) is bound by residues arginine 133, glutamate 168, lysine 284, and lysine 308. Residues cysteine 402, cysteine 405, cysteine 420, and cysteine 425 each coordinate Zn(2+). The 78-residue stretch at 582–659 folds into the BRCT domain; sequence AKPQIFAGKS…SEEEFAELLP (78 aa).

Belongs to the NAD-dependent DNA ligase family. LigA subfamily. Mg(2+) serves as cofactor. The cofactor is Mn(2+).

It carries out the reaction NAD(+) + (deoxyribonucleotide)n-3'-hydroxyl + 5'-phospho-(deoxyribonucleotide)m = (deoxyribonucleotide)n+m + AMP + beta-nicotinamide D-nucleotide.. Functionally, DNA ligase that catalyzes the formation of phosphodiester linkages between 5'-phosphoryl and 3'-hydroxyl groups in double-stranded DNA using NAD as a coenzyme and as the energy source for the reaction. It is essential for DNA replication and repair of damaged DNA. The polypeptide is DNA ligase (Desulfitobacterium hafniense (strain DSM 10664 / DCB-2)).